The sequence spans 394 residues: MFRHVAQNLGSRNTSIQSYRLLRTRWERGYLKDLYHRRQILGADPAISRSSYPNWDYDSELYAFGHRIGAPEISEDQYIKALTNESFFQRADVEENVESAQPGAEVGTEHNAELVKRGEQNLSIWLKRYLRFHLAKAPEELIEAIDSHLLDDECLAGIASHLGIDHLVRTKEFPISQESSADAFRALAGVFSDEKVKNLVIDFIVPQLVDIDFADIYPLADPLAVVTDLLKSNGVTEIEPRVLRSAGENSAEPIYVVAIYADKLKNVGQSAGESLAIAVDMAAREALLRLWDITSEKVLFFGDRAANVPLERYSQPNFSLSQKCSPGTNTNIIDHSQPVESPDNLIEAVLRYRNVVDAEVGKSYTKRLRHKFSRGSLAKRSFRYLVKPKPYTVA.

Residues 1–21 constitute a mitochondrion transit peptide; that stretch reads MFRHVAQNLGSRNTSIQSYRL.

It belongs to the ribonuclease III family. Mitochondrion-specific ribosomal protein mL44 subfamily. In terms of assembly, component of the mitochondrial large ribosomal subunit (mt-LSU).

It is found in the mitochondrion. In terms of biological role, component of the mitochondrial ribosome. May have a function in the assembly/stability of nascent mitochondrial polypeptides exiting the ribosome. The protein is Large ribosomal subunit protein mL44 of Caenorhabditis elegans.